Consider the following 198-residue polypeptide: Na(+)-translocating NADH-quinone reductase subunit E (198 aa).

Transmembrane regions (helical) follow at residues 11-31, 35-55, 77-97, 110-130, 140-160, and 176-196; these read SVFI…FLAV, VSTA…AVPA, FLNF…LEMI, GIFL…SFMV, VVYG…LAGL, and LGIT…FSGI.

It belongs to the NqrDE/RnfAE family. As to quaternary structure, composed of six subunits; NqrA, NqrB, NqrC, NqrD, NqrE and NqrF.

It localises to the cell inner membrane. The enzyme catalyses a ubiquinone + n Na(+)(in) + NADH + H(+) = a ubiquinol + n Na(+)(out) + NAD(+). In terms of biological role, NQR complex catalyzes the reduction of ubiquinone-1 to ubiquinol by two successive reactions, coupled with the transport of Na(+) ions from the cytoplasm to the periplasm. NqrA to NqrE are probably involved in the second step, the conversion of ubisemiquinone to ubiquinol. The protein is Na(+)-translocating NADH-quinone reductase subunit E of Actinobacillus pleuropneumoniae serotype 5b (strain L20).